Reading from the N-terminus, the 364-residue chain is Pre-mRNA-splicing factor SLT11 (364 aa).

The tract at residues 331-364 (KSTDNAKNDKKKTSKKVHKDRSKKSKPRANKLTI) is disordered. Residues 339–364 (DKKKTSKKVHKDRSKKSKPRANKLTI) show a composition bias toward basic residues.

Belongs to the SLT11 family. Belongs to the CWC complex (or CEF1-associated complex), a spliceosome subcomplex composed of the U2, U5 and U6 snRNAs and at least BUD13, BUD31, BRR2, CDC40, CEF1, CLF1, CUS1, CWC2, CWC15, CWC21, CWC22, CWC23, CWC24, CWC25, CWC27, ECM2, HSH155, IST3, ISY1, LEA1, MSL1, NTC20, PRP8, PRP9, PRP11, PRP19, PRP21, PRP22, PRP45, PRP46, SLU7, SMB1, SMD1, SMD2, SMD3, SMX2, SMX3, SNT309, SNU114, SPP2, SYF1, SYF2, RSE1 and YJU2. Interacts with SLU7.

Its subcellular location is the nucleus. In terms of biological role, involved in pre-mRNA splicing. Facilitates the cooperative formation of U2/U6 helix II in association with stem II in the spliceosome. Binds to RNA. The sequence is that of Pre-mRNA-splicing factor SLT11 (ECM2) from Saccharomyces cerevisiae (strain ATCC 204508 / S288c) (Baker's yeast).